The chain runs to 59 residues: Large ribosomal subunit protein uL30 (59 aa).

Belongs to the universal ribosomal protein uL30 family. In terms of assembly, part of the 50S ribosomal subunit.

This chain is Large ribosomal subunit protein uL30, found in Buchnera aphidicola subsp. Schizaphis graminum (strain Sg).